A 577-amino-acid polypeptide reads, in one-letter code: 2-hydroxyacyl-CoA lyase (577 aa).

Thiamine diphosphate is bound at residue Glu-59. The segment at 412-493 is thiamine pyrophosphate binding; the sequence is TMDVGRAVLV…VIVFNNNGVY (82 aa). The Mg(2+) site is built by Asp-462 and Asn-489.

This sequence belongs to the TPP enzyme family. Homotetramer. Mg(2+) is required as a cofactor. Thiamine diphosphate serves as cofactor.

The catalysed reaction is an (R)-2-hydroxy-long-chain-fatty acyl-CoA = a long-chain fatty aldehyde + formyl-CoA. It catalyses the reaction a 2-hydroxy-3-methyl fatty acyl-CoA = a 2-methyl-branched fatty aldehyde + formyl-CoA. Its function is as follows. Catalyzes a carbon-carbon cleavage reaction; cleaves a 2-hydroxy-3-methylacyl-CoA into formyl-CoA and a 2-methyl-branched fatty aldehyde. This is 2-hydroxyacyl-CoA lyase from Oryza sativa subsp. japonica (Rice).